A 250-amino-acid polypeptide reads, in one-letter code: 5'-nucleotidase SurE (250 aa).

Residues Asp8, Asp9, Ser39, and Asn91 each contribute to the a divalent metal cation site.

Belongs to the SurE nucleotidase family. It depends on a divalent metal cation as a cofactor.

Its subcellular location is the cytoplasm. It carries out the reaction a ribonucleoside 5'-phosphate + H2O = a ribonucleoside + phosphate. Functionally, nucleotidase that shows phosphatase activity on nucleoside 5'-monophosphates. This chain is 5'-nucleotidase SurE, found in Leptospira borgpetersenii serovar Hardjo-bovis (strain L550).